We begin with the raw amino-acid sequence, 322 residues long: Tyrosine recombinase XerC (322 aa).

The segment at 1–25 (MPEAAPPVADARGSSPTATTGPGAD) is disordered. A compositionally biased stretch (low complexity) spans 16 to 25 (PTATTGPGAD). The Core-binding (CB) domain occupies 25-111 (DATLSAVEPF…ACRSYYAWLL (87 aa)). In terms of domain architecture, Tyr recombinase spans 132–309 (KLPQVLDADE…DFQHLAKVYD (178 aa)). Residues Arg171, Lys195, His261, Arg264, and His287 contribute to the active site. Tyr296 acts as the O-(3'-phospho-DNA)-tyrosine intermediate in catalysis.

This sequence belongs to the 'phage' integrase family. XerC subfamily. As to quaternary structure, forms a cyclic heterotetrameric complex composed of two molecules of XerC and two molecules of XerD.

The protein localises to the cytoplasm. In terms of biological role, site-specific tyrosine recombinase, which acts by catalyzing the cutting and rejoining of the recombining DNA molecules. The XerC-XerD complex is essential to convert dimers of the bacterial chromosome into monomers to permit their segregation at cell division. It also contributes to the segregational stability of plasmids. The protein is Tyrosine recombinase XerC of Xanthomonas campestris pv. campestris (strain 8004).